A 405-amino-acid chain; its full sequence is Arginine biosynthesis bifunctional protein ArgJ, mitochondrial (405 aa).

4 residues coordinate substrate: Thr174, Lys200, Thr211, and Glu300. Thr211 serves as the catalytic Nucleophile.

This sequence belongs to the ArgJ family. In terms of assembly, heterodimer of an alpha and a beta chain. In terms of processing, the alpha and beta chains are autoproteolytically processed from a single precursor protein within the mitochondrion.

It localises to the mitochondrion matrix. It catalyses the reaction N(2)-acetyl-L-ornithine + L-glutamate = N-acetyl-L-glutamate + L-ornithine. The enzyme catalyses L-glutamate + acetyl-CoA = N-acetyl-L-glutamate + CoA + H(+). It functions in the pathway amino-acid biosynthesis; L-arginine biosynthesis; L-ornithine and N-acetyl-L-glutamate from L-glutamate and N(2)-acetyl-L-ornithine (cyclic): step 1/1. It participates in amino-acid biosynthesis; L-arginine biosynthesis; N(2)-acetyl-L-ornithine from L-glutamate: step 1/4. Functionally, catalyzes two activities which are involved in the cyclic version of arginine biosynthesis: the synthesis of acetylglutamate from glutamate and acetyl-CoA, and of ornithine by transacetylation between acetylornithine and glutamate. The polypeptide is Arginine biosynthesis bifunctional protein ArgJ, mitochondrial (Candida tropicalis (strain ATCC MYA-3404 / T1) (Yeast)).